The sequence spans 156 residues: MKLHILAVGHKMPDWIATGFDEYAKRMPPELRIELREIKPEQRSSGRSAESVMASERQKIEAALPRNARIVALDERGKDWTTMQLANALPTWQQDGRDVAFLIGGADGLDPDLKARADMLLRVSSLTLPHAMVRVLLAEQLYRAWTITQNHPYHRV.

Residues L73, G104, and 123–128 (VSSLTL) contribute to the S-adenosyl-L-methionine site.

It belongs to the RNA methyltransferase RlmH family. Homodimer.

The protein localises to the cytoplasm. It catalyses the reaction pseudouridine(1915) in 23S rRNA + S-adenosyl-L-methionine = N(3)-methylpseudouridine(1915) in 23S rRNA + S-adenosyl-L-homocysteine + H(+). In terms of biological role, specifically methylates the pseudouridine at position 1915 (m3Psi1915) in 23S rRNA. This Paraburkholderia phymatum (strain DSM 17167 / CIP 108236 / LMG 21445 / STM815) (Burkholderia phymatum) protein is Ribosomal RNA large subunit methyltransferase H.